We begin with the raw amino-acid sequence, 436 residues long: Ribosomal protein uS12 methylthiotransferase RimO (436 aa).

An MTTase N-terminal domain is found at Lys-4 to His-122. Residues Cys-13, Cys-51, Cys-85, Cys-146, Cys-150, and Cys-153 each coordinate [4Fe-4S] cluster. The Radical SAM core domain occupies Thr-132 to Glu-363. Residues Ala-366–Asn-433 form the TRAM domain.

Belongs to the methylthiotransferase family. RimO subfamily. The cofactor is [4Fe-4S] cluster.

The protein resides in the cytoplasm. It carries out the reaction L-aspartate(89)-[ribosomal protein uS12]-hydrogen + (sulfur carrier)-SH + AH2 + 2 S-adenosyl-L-methionine = 3-methylsulfanyl-L-aspartate(89)-[ribosomal protein uS12]-hydrogen + (sulfur carrier)-H + 5'-deoxyadenosine + L-methionine + A + S-adenosyl-L-homocysteine + 2 H(+). Its function is as follows. Catalyzes the methylthiolation of an aspartic acid residue of ribosomal protein uS12. This Bacteroides thetaiotaomicron (strain ATCC 29148 / DSM 2079 / JCM 5827 / CCUG 10774 / NCTC 10582 / VPI-5482 / E50) protein is Ribosomal protein uS12 methylthiotransferase RimO.